A 504-amino-acid polypeptide reads, in one-letter code: Probable ergothioneine transporter EgtUBC (504 aa).

The region spanning 19-198 (LVQHIQISFV…LLAILFDFLL (180 aa)) is the ABC transmembrane type-1 domain. The next 6 membrane-spanning stretches (helical) occupy residues 25–44 (ISFV…GIYL), 57–74 (VAAI…GLLI), 81–97 (IVPA…LPIL), 146–170 (MVLI…LILL), 179–198 (LILL…DFLL), and 210–229 (IITI…VPYF). The segment at 231 to 504 (SDKKEITIAG…DYLKDQGIIK (274 aa)) is ergothioneine binding domain.

In the N-terminal section; belongs to the binding-protein-dependent transport system permease family. It in the C-terminal section; belongs to the OsmX family. In terms of assembly, the complex is probably composed of at least an ATP-binding protein (EgtUA) and a transmembrane protein (EgtUBC).

The protein localises to the membrane. Part of an ABC transporter complex EgtU required for the uptake of ergothioneine (EGT), a natural low-molecular weight (LMW) thiol antioxidant. Responsible for the translocation of the substrate across the membrane. Also contains a C-terminal periplasmic solute-binding domain (SBD) which binds to EGT with sub-micromolar affinity. Does not bind glycine betaine, carnitine, choline, proline, or cholate. Plays a role in bile acid tolerance. Dispensable for choline uptake. Probably not involved in betaine, carnitine or choline mediated osmo- or chill tolerance. Plays a role in enhancing virulence in mice. This is Probable ergothioneine transporter EgtUBC from Listeria monocytogenes serovar 1/2a (strain ATCC BAA-679 / EGD-e).